The sequence spans 417 residues: Serine/threonine-protein phosphatase 4 regulatory subunit 2 (417 aa).

Composition is skewed to polar residues over residues Glu-140–Arg-149, Asn-158–Gly-170, and Ala-186–Ser-196. The tract at residues Glu-140–Asp-417 is disordered. Phosphoserine is present on Ser-159. A compositionally biased stretch (basic and acidic residues) spans Thr-197 to Ser-213. A compositionally biased stretch (low complexity) spans Asp-214–Ser-226. Ser-226 carries the phosphoserine modification. Basic and acidic residues predominate over residues Lys-231–Glu-258. Polar residues predominate over residues Thr-259–Ser-269. Basic and acidic residues predominate over residues Gln-283–Thr-297. Acidic residues predominate over residues Glu-298–Ser-311. Residues Met-318 to Lys-327 are compositionally biased toward basic and acidic residues. A compositionally biased stretch (acidic residues) spans Glu-338 to Asp-350. The segment covering Gln-353 to Gly-363 has biased composition (basic and acidic residues). Over residues Gly-385–Ser-399 the composition is skewed to polar residues. Residues Met-400 to Asp-417 are compositionally biased toward acidic residues.

This sequence belongs to the PPP4R2 family. In terms of assembly, serine/threonine-protein phosphatase 4 (PP4) occurs in different assemblies of the catalytic and one or more regulatory subunits. Component of the PP4 complexes PPP4C-PPP4R2, PPP4C-PPP4R2-PPP4R3A and PPP4C-PPP4R2-PPP4R3B. The PPP4C-PPP4R2 complex appears to be a tetramer composed of 2 molecules of PPP4C and 2 molecules of PPP4R2. Interacts with DDX20/GEMIN3 and GEMIN4. Interacts with RPA2; this DNA damage-dependent interaction recruits PPP4C leading to RPA2 dephosphorylation.

The protein resides in the cytoplasm. Its subcellular location is the cytoskeleton. The protein localises to the microtubule organizing center. It localises to the centrosome. It is found in the nucleus. In terms of biological role, regulatory subunit of serine/threonine-protein phosphatase 4 (PP4). May regulate the activity of PPP4C at centrosomal microtubule organizing centers. Its interaction with the SMN complex leads to enhance the temporal localization of snRNPs, suggesting a role of PPP4C in maturation of spliceosomal snRNPs. The PPP4C-PPP4R2-PPP4R3A PP4 complex specifically dephosphorylates H2AX phosphorylated on 'Ser-140' (gamma-H2AX) generated during DNA replication and required for DNA double strand break repair. Mediates RPA2 dephosphorylation by recruiting PPP4C to RPA2 in a DNA damage-dependent manner. RPA2 dephosphorylation is required for the efficient RPA2-mediated recruitment of RAD51 to chromatin following double strand breaks, an essential step for DNA repair. The polypeptide is Serine/threonine-protein phosphatase 4 regulatory subunit 2 (PPP4R2) (Pongo abelii (Sumatran orangutan)).